Reading from the N-terminus, the 235-residue chain is Ubiquinone biosynthesis O-methyltransferase (235 aa).

4 residues coordinate S-adenosyl-L-methionine: R39, G59, D80, and M124.

The protein belongs to the methyltransferase superfamily. UbiG/COQ3 family.

The catalysed reaction is a 3-demethylubiquinol + S-adenosyl-L-methionine = a ubiquinol + S-adenosyl-L-homocysteine + H(+). The enzyme catalyses a 3-(all-trans-polyprenyl)benzene-1,2-diol + S-adenosyl-L-methionine = a 2-methoxy-6-(all-trans-polyprenyl)phenol + S-adenosyl-L-homocysteine + H(+). The protein operates within cofactor biosynthesis; ubiquinone biosynthesis. Functionally, O-methyltransferase that catalyzes the 2 O-methylation steps in the ubiquinone biosynthetic pathway. The chain is Ubiquinone biosynthesis O-methyltransferase from Vibrio vulnificus (strain CMCP6).